Here is a 180-residue protein sequence, read N- to C-terminus: Transcription factor HES-7.1-B (180 aa).

The bHLH domain occupies 13 to 70 (HRKLLKPLVEKRRRERINNSLEKLRIFLSQTLKSEKLKNPKVEKAEILECTVQFLQSR). Residues 84–116 (YQSGFQHCLETTLHFMNSKPDMNGVTKELLSHQ) enclose the Orange domain. The WRPW motif signature appears at 176-179 (WRPW).

As to quaternary structure, transcription repression requires formation of a complex with a corepressor protein of the Groucho/TLE family. In terms of tissue distribution, expressed in the presumptive midbrain-hindbrain boundary (MHB) as early as the early gastrula stage (stage 10.5). Expression in the MHB continues through to tailbud stage. Also transiently expressed in the eye anlage at late neurula stage.

It localises to the nucleus. Functionally, transcriptional repressor. Represses transcription from both N box- and E box-containing promoters. Demarcates the prospective midbrain-hindbrain boundary (MHB) region in the neuroectoderm in early gastrulae embryos by repressing transcription of a number of target genes. This Xenopus laevis (African clawed frog) protein is Transcription factor HES-7.1-B (hes7.1-b).